A 245-amino-acid chain; its full sequence is Type II restriction enzyme MjaIV (245 aa).

The enzyme catalyses Endonucleolytic cleavage of DNA to give specific double-stranded fragments with terminal 5'-phosphates.. Its function is as follows. A P subtype restriction enzyme that recognizes the double-stranded sequence 5'-GTNNAC-3'; the cleavage site is unknown. The chain is Type II restriction enzyme MjaIV (mjaIVR) from Methanocaldococcus jannaschii (strain ATCC 43067 / DSM 2661 / JAL-1 / JCM 10045 / NBRC 100440) (Methanococcus jannaschii).